The sequence spans 754 residues: Ubiquitin carboxyl-terminal hydrolase 9 (754 aa).

Over residues 1–14 (MIKRWLSVNRKKSH) the composition is skewed to basic residues. A disordered region spans residues 1-76 (MIKRWLSVNR…SKFSSQTDNL (76 aa)). The segment covering 42–58 (SIAKSPSAKSSTSSIPS) has biased composition (low complexity). The 534-residue stretch at 134 to 667 (FGYENFGNTC…TAYVLFYKET (534 aa)) folds into the USP domain. Catalysis depends on Cys-143, which acts as the Nucleophile. Residues 194-209 (ETSTNSGNSNTGYQSN) are compositionally biased toward polar residues. Residues 194–273 (ETSTNSGNSN…DNNEMERPQP (80 aa)) form a disordered region. Over residues 222–233 (QSDQDNSSSSTQ) the composition is skewed to low complexity. Basic and acidic residues predominate over residues 250–272 (GKDKSNYKDSAKKDDNNEMERPQ). His-618 functions as the Proton acceptor in the catalytic mechanism. The interval 726-754 (VKTAETKTPLNDKKRNKQKRKSRILSFIK) is disordered. Residues 727–738 (KTAETKTPLNDK) show a composition bias toward basic and acidic residues. Positions 739–748 (KRNKQKRKSR) are enriched in basic residues.

It belongs to the peptidase C19 family.

The enzyme catalyses Thiol-dependent hydrolysis of ester, thioester, amide, peptide and isopeptide bonds formed by the C-terminal Gly of ubiquitin (a 76-residue protein attached to proteins as an intracellular targeting signal).. This is Ubiquitin carboxyl-terminal hydrolase 9 (UBP9) from Saccharomyces cerevisiae (strain ATCC 204508 / S288c) (Baker's yeast).